A 602-amino-acid polypeptide reads, in one-letter code: Elongation factor 4 (602 aa).

The 183-residue stretch at 7–189 folds into the tr-type G domain; it reads RNIRNFSIIA…AIVHRIPPPK (183 aa). GTP contacts are provided by residues 19-24 and 136-139; these read DHGKST and NKID.

It belongs to the TRAFAC class translation factor GTPase superfamily. Classic translation factor GTPase family. LepA subfamily.

It localises to the cell inner membrane. It catalyses the reaction GTP + H2O = GDP + phosphate + H(+). Required for accurate and efficient protein synthesis under certain stress conditions. May act as a fidelity factor of the translation reaction, by catalyzing a one-codon backward translocation of tRNAs on improperly translocated ribosomes. Back-translocation proceeds from a post-translocation (POST) complex to a pre-translocation (PRE) complex, thus giving elongation factor G a second chance to translocate the tRNAs correctly. Binds to ribosomes in a GTP-dependent manner. This Stenotrophomonas maltophilia (strain R551-3) protein is Elongation factor 4.